The primary structure comprises 1131 residues: DNA polymerase II large subunit (1131 aa).

The protein belongs to the archaeal DNA polymerase II family. Heterodimer of a large subunit and a small subunit.

The enzyme catalyses DNA(n) + a 2'-deoxyribonucleoside 5'-triphosphate = DNA(n+1) + diphosphate. It catalyses the reaction Exonucleolytic cleavage in the 3'- to 5'-direction to yield nucleoside 5'-phosphates.. Its function is as follows. Possesses two activities: a DNA synthesis (polymerase) and an exonucleolytic activity that degrades single-stranded DNA in the 3'- to 5'-direction. Has a template-primer preference which is characteristic of a replicative DNA polymerase. The sequence is that of DNA polymerase II large subunit from Methanococcus vannielii (strain ATCC 35089 / DSM 1224 / JCM 13029 / OCM 148 / SB).